A 427-amino-acid chain; its full sequence is Glutamyl-tRNA reductase (427 aa).

Substrate is bound by residues 49–52, S101, 106–108, and Q112; these read TCNR and EPQ. C50 acts as the Nucleophile in catalysis. 181–186 is an NADP(+) binding site; the sequence is GAGETI. Residues 407–427 form a disordered region; that stretch reads FPATPGYRHPPVRPDDADPAP. Basic and acidic residues predominate over residues 418–427; the sequence is VRPDDADPAP.

This sequence belongs to the glutamyl-tRNA reductase family. Homodimer.

It carries out the reaction (S)-4-amino-5-oxopentanoate + tRNA(Glu) + NADP(+) = L-glutamyl-tRNA(Glu) + NADPH + H(+). The protein operates within porphyrin-containing compound metabolism; protoporphyrin-IX biosynthesis; 5-aminolevulinate from L-glutamyl-tRNA(Glu): step 1/2. Its function is as follows. Catalyzes the NADPH-dependent reduction of glutamyl-tRNA(Glu) to glutamate 1-semialdehyde (GSA). This is Glutamyl-tRNA reductase from Stenotrophomonas maltophilia (strain R551-3).